We begin with the raw amino-acid sequence, 298 residues long: dTDP-4-dehydrorhamnose reductase (298 aa).

NADH contacts are provided by residues 10-12 (GQV), 35-36 (DL), and 59-61 (AYT). NADPH is bound by residues 11-12 (QV), 35-36 (DL), 59-61 (AYT), and Tyr98. Residue 100–101 (TD) coordinates dTDP-beta-L-rhamnose. NADH contacts are provided by Tyr124 and Lys128. Residues Tyr124 and Lys128 each contribute to the NADPH site. Tyr124 serves as the catalytic Proton donor/acceptor. Trp149 is a dTDP-beta-L-rhamnose binding site.

The protein belongs to the dTDP-4-dehydrorhamnose reductase family. In terms of assembly, homodimer. Requires Mg(2+) as cofactor.

The catalysed reaction is dTDP-beta-L-rhamnose + NADP(+) = dTDP-4-dehydro-beta-L-rhamnose + NADPH + H(+). It participates in carbohydrate biosynthesis; dTDP-L-rhamnose biosynthesis. It functions in the pathway bacterial outer membrane biogenesis; LPS O-antigen biosynthesis. Functionally, involved in the biosynthesis of the dTDP-L-rhamnose which is an important component of lipopolysaccharide (LPS). Catalyzes the reduction of dTDP-6-deoxy-L-lyxo-4-hexulose to yield dTDP-L-rhamnose. This Burkholderia thailandensis (strain ATCC 700388 / DSM 13276 / CCUG 48851 / CIP 106301 / E264) protein is dTDP-4-dehydrorhamnose reductase.